Reading from the N-terminus, the 386-residue chain is uncharacterized protein (386 aa).

The interval 355 to 386 (PSEAQKVQVKSNKKPPIAPKPEHLKKRDHGLC) is disordered. Residues 377 to 386 (HLKKRDHGLC) are compositionally biased toward basic residues.

This is an uncharacterized protein from Rickettsia prowazekii (strain Madrid E).